We begin with the raw amino-acid sequence, 301 residues long: uncharacterized protein (301 aa).

The next 9 membrane-spanning stretches (helical) occupy residues 1 to 21 (MSWI…LRII), 33 to 53 (SVLF…YVYY), 72 to 92 (AMSL…KIPW), 101 to 121 (FGII…IILI), 124 to 144 (FAWL…KTFY), 194 to 214 (VLIE…IFAI), 220 to 240 (IIYT…FCLA), 253 to 273 (LALI…IAIP), and 274 to 294 (EYVA…ASII).

The protein belongs to the TerC family.

Its subcellular location is the cell membrane. This is an uncharacterized protein from Rickettsia conorii (strain ATCC VR-613 / Malish 7).